A 1579-amino-acid chain; its full sequence is Eukaryotic translation initiation factor 4 gamma 3 (1579 aa).

Disordered stretches follow at residues 1-35 (MNSQPQARSPFFQRPQIQPPRAAIPNSSPSIRPGV) and 128-326 (TQQQ…GPSL). Over residues 10–25 (PFFQRPQIQPPRAAIP) the composition is skewed to low complexity. Residues 26–35 (NSSPSIRPGV) show a composition bias toward polar residues. The PABPC1-binding stretch occupies residues 134–162 (PAKREKKTIRIRDPNQGGKDITEEIMSGG). The segment covering 167–183 (PTPPIGRPASTPTPPQQ) has biased composition (pro residues). T168 is modified (phosphothreonine). Residues S230, S232, and S267 each carry the phosphoserine modification. The segment covering 266–292 (SSPTSLPPLARSSLPSPMSAALSSQPL) has biased composition (low complexity). Basic and acidic residues predominate over residues 295 to 308 (AEDKCELPSSKEED). Positions 315–326 (PTSCTAASGPSL) are enriched in polar residues. Phosphoserine occurs at positions 436, 470, 472, and 490. Basic and acidic residues predominate over residues 454–470 (RTCLSKDAKEMQDKAES). Disordered stretches follow at residues 454 to 615 (RTCL…DTEG), 681 to 706 (RQTPGGRGVPLLNVGPRRSQPGQRRE), and 724 to 744 (AENAWKPSQKRDSHADDPESI). Positions 471 to 480 (ESDGQAEETA) are enriched in acidic residues. The segment covering 481-501 (DPQSLHSGRSPAPVQTATTAP) has biased composition (polar residues). 2 stretches are compositionally biased toward basic and acidic residues: residues 506–515 (KTKEQTRTPD) and 549–563 (SERDPSALKRGKAEE). Residues 589–598 (SGSADSSADG) show a composition bias toward low complexity. The span at 606-615 (ESWKPADTEG) shows a compositional bias: basic and acidic residues. The EIF4E-binding stretch occupies residues 614–625 (EGKKQYDREFLL). The interval 694-1014 (VGPRRSQPGQ…EQRKVQQLMT (321 aa)) is eIF3/EIF4A-binding. HEAT repeat units follow at residues 740-778 (DPESIKTQELFRKVRSILNKLTPQMFNQLMKQVSALTVD), 779-826 (TEER…GNTV), 827-900 (NFRK…LKML), 901-939 (TEAIMHDCVVKLLKNHDEESLECLCRLLTTIGKDLDFEK), and 940-979 (AKPRMDQYFNQMEKIVKERKTSSRIRFMLQDVIDLRLCNW). The 229-residue stretch at 750–978 (FRKVRSILNK…QDVIDLRLCN (229 aa)) folds into the MIF4G domain. The segment covering 855-871 (KELEAASAPEERTRLHD) has biased composition (basic and acidic residues). The interval 855 to 875 (KELEAASAPEERTRLHDELEE) is disordered. Residues 989–1018 (KTIEQIHKEAKIEEQEEQRKVQQLMTKEKR) adopt a coiled-coil conformation. Disordered stretches follow at residues 1009–1037 (VQQLMTKEKRRPGVQRVDEGGWNTVQGAK) and 1067–1214 (LGSW…LSEE). Residues 1086–1098 (LRSSASSLNRFSP) show a composition bias toward low complexity. A Phosphoserine; by CaMK1 modification is found at S1150. Basic and acidic residues-rich tracts occupy residues 1150–1169 (SSKDLLDNQSQEEQRREMLE) and 1179–1197 (DAERASTEADRSKTRELAK). A coiled-coil region spans residues 1154-1176 (LLDNQSQEEQRREMLETVKQLTG). At S1212 the chain carries Phosphoserine. An MI domain is found at 1215–1337 (EVERKSKSII…SMRELIVEFS (123 aa)). Residues 1406–1438 (SSEALSKKELSAEELSQRLEKLIMEEKADDERI) are a coiled coil. The W2 domain maps to 1410–1579 (LSKKELSAEE…REAEEESEDN (170 aa)). An EIF4A-binding region spans residues 1427–1579 (LIMEEKADDE…REAEEESEDN (153 aa)). The interval 1565–1579 (FFTWLREAEEESEDN) is necessary but not sufficient for MKNK1-binding.

It belongs to the eukaryotic initiation factor 4G family. As to quaternary structure, interacts with EIF4A, EIF4E, eIF3 and PABPC1. Part of a complex with EIF4E. eIF4F is a multi-subunit complex, the composition of which varies with external and internal environmental conditions. It is composed of at least EIF4A, EIF4E and EIF4G1/EIF4G3. EIF4G1/EIF4G3 interacts through its C-terminus with the serine/threonine kinases MKNK1, and with MKNK2. Appears to act as a scaffold protein, holding these enzymes in place to phosphorylate eIF4E. Non-phosphorylated EIF4EBP1 competes with EIF4G1/EIFG3 to interact with EIF4E; insulin stimulated MAP-kinase (MAPK1 and MAPK3) phosphorylation of EIF4EBP1 causes dissociation of the complex allowing EIF4G1/EIF4G3 to bind and consequent initiation of translation. EIF4G1/EIF4G3 interacts with PABPC1 to bring about circularization of the mRNA. Interacts with FXR1; promoting translation of FXR1 target mRNAs.

Functionally, component of the protein complex eIF4F, which is involved in the recognition of the mRNA cap, ATP-dependent unwinding of 5'-terminal secondary structure and recruitment of mRNA to the ribosome. Functional homolog of EIF4G1. This Mus musculus (Mouse) protein is Eukaryotic translation initiation factor 4 gamma 3 (Eif4g3).